The sequence spans 1217 residues: Endonuclease YhcR (1217 aa).

The first 46 residues, 1–46, serve as a signal peptide directing secretion; the sequence is MLSVEMISRQNRCHYVYKGGNMMRRILHIVLITALMFLNVMYTFEA. The TNase-like domain occupies 376–517; that stretch reads GEYEGIVDRV…KKDQKGIWNE (142 aa). Active-site residues include Arg-404, Glu-412, and Arg-460. The segment at 590–828 is phosphoesterase; sequence LRILSMNDLH…VIFAAHNHQV (239 aa). Positions 597, 599, 647, 680, 792, and 824 each coordinate a divalent metal cation. The segment at 829 to 1085 is 5'-nucleotidase; it reads VNGEVNGKLI…AYTKEGRIKL (257 aa). Residues Phe-965 and 1035 to 1042 each bind substrate; that span reads FMATATGA. The disordered stretch occupies residues 1087 to 1142; that stretch reads EASDIEDPVTEDPITEEPGDDPGTEDPIKEDPRPGEDLPDIKETPGTAPVHQLPPS. The segment covering 1089 to 1110 has biased composition (acidic residues); sequence SDIEDPVTEDPITEEPGDDPGT. A compositionally biased stretch (basic and acidic residues) spans 1112-1129; it reads DPIKEDPRPGEDLPDIKE. Positions 1182–1186 match the LPXTG sorting signal motif; it reads LPDTS. Thr-1185 bears the Pentaglycyl murein peptidoglycan amidated threonine mark. A propeptide spans 1186–1217 (removed by sortase); that stretch reads SAGYYNFMVIGAAVTLSGTYLYVRRKRSASRT.

In the C-terminal section; belongs to the 5'-nucleotidase family. Ca(2+) serves as cofactor. Mn(2+) is required as a cofactor.

Its subcellular location is the secreted. The protein localises to the cell wall. Its activity is regulated as follows. Requires a minimum of 0.1 mM of calcium for a significant activity. Maximal activity was observed with concentrations of calcium between 1 to 5 mM. Is 10-fold less active with the corresponding concentrations of manganese. Inhibited by NaCl at concentrations of 100 mM and higher. In terms of biological role, sugar-nonspecific endonuclease that yields nucleotide 3'-monophosphate products. No 5'-nucleotidase activity was detected, using 5'-AMP as the substrate, in the presence of diverse divalent metals and with various pH values. The polypeptide is Endonuclease YhcR (yhcR) (Bacillus subtilis (strain 168)).